Consider the following 354-residue polypeptide: Protein-glutamate methylesterase/protein-glutamine glutaminase 2 (354 aa).

Residues 5–122 (RVLIVDDSAL…SLKIKEVAEE (118 aa)) enclose the Response regulatory domain. Aspartate 56 carries the 4-aspartylphosphate modification. The 196-residue stretch at 159–354 (PDTSFKKLIL…IADRIVELVR (196 aa)) folds into the CheB-type methylesterase domain. Catalysis depends on residues serine 172, histidine 199, and aspartate 298.

Belongs to the CheB family. Phosphorylated by CheA. Phosphorylation of the N-terminal regulatory domain activates the methylesterase activity.

Its subcellular location is the cytoplasm. The catalysed reaction is [protein]-L-glutamate 5-O-methyl ester + H2O = L-glutamyl-[protein] + methanol + H(+). The enzyme catalyses L-glutaminyl-[protein] + H2O = L-glutamyl-[protein] + NH4(+). Involved in chemotaxis. Part of a chemotaxis signal transduction system that modulates chemotaxis in response to various stimuli. Catalyzes the demethylation of specific methylglutamate residues introduced into the chemoreceptors (methyl-accepting chemotaxis proteins or MCP) by CheR. Also mediates the irreversible deamidation of specific glutamine residues to glutamic acid. The chain is Protein-glutamate methylesterase/protein-glutamine glutaminase 2 from Carboxydothermus hydrogenoformans (strain ATCC BAA-161 / DSM 6008 / Z-2901).